A 242-amino-acid polypeptide reads, in one-letter code: Ribosomal RNA small subunit methyltransferase G (242 aa).

Residues Gly78, Leu83, 130–131 (AE), and Arg151 contribute to the S-adenosyl-L-methionine site.

Belongs to the methyltransferase superfamily. RNA methyltransferase RsmG family.

The protein resides in the cytoplasm. Functionally, specifically methylates the N7 position of guanine in position 518 of 16S rRNA. In Salinispora arenicola (strain CNS-205), this protein is Ribosomal RNA small subunit methyltransferase G.